Consider the following 275-residue polypeptide: Probable 2' cyclic ADP-D-ribose synthase TcpB (275 aa).

Residues R17–A32 show a composition bias toward basic and acidic residues. Positions R17 to G66 are disordered. Residues A39 to S48 show a composition bias toward low complexity. A compositionally biased stretch (basic and acidic residues) spans K55–R64. The TIR domain occupies E142–I275. NAD(+) contacts are provided by residues A151–S152 and K181. E217 is an active-site residue.

In terms of assembly, homodimer. Interacts with host TIRAP, and probably host MYD88. Interacts with host TLR4, abolishes the interaction of host TIRAP with TLR4.

It is found in the secreted. The protein localises to the host cell membrane. It catalyses the reaction NAD(+) + H2O = ADP-D-ribose + nicotinamide + H(+). The enzyme catalyses NAD(+) = 2'cADPR + nicotinamide + H(+). Virulence factor that interferes with host Toll-like receptor 2 (TLR2) and TLR4 signaling, resulting in the reduction of dendritic cell maturation, inhibition of pro-inflammatory cytokine secretion and impaired NF-kappa-B activation in macrophages. Binds host lipids. Has NAD(+) hydrolase (NADase) activity, catalyzes cleavage of NAD(+) into ADP-D-ribose (ADPR) and nicotinamide, also generates a cyclization variant of cyclic ADPR (cADPR), termed v-cADPR (probably 2'cADPR). The polypeptide is Probable 2' cyclic ADP-D-ribose synthase TcpB (tcpB) (Brucella melitensis biotype 2 (strain ATCC 23457)).